Reading from the N-terminus, the 362-residue chain is Chorismate synthase (362 aa).

Arginine 47 is an NADP(+) binding site. FMN-binding positions include 124 to 126 (RSS), glycine 286, 301 to 305 (KPTAT), and arginine 327.

It belongs to the chorismate synthase family. As to quaternary structure, homotetramer. Requires FMNH2 as cofactor.

It catalyses the reaction 5-O-(1-carboxyvinyl)-3-phosphoshikimate = chorismate + phosphate. It participates in metabolic intermediate biosynthesis; chorismate biosynthesis; chorismate from D-erythrose 4-phosphate and phosphoenolpyruvate: step 7/7. Functionally, catalyzes the anti-1,4-elimination of the C-3 phosphate and the C-6 proR hydrogen from 5-enolpyruvylshikimate-3-phosphate (EPSP) to yield chorismate, which is the branch point compound that serves as the starting substrate for the three terminal pathways of aromatic amino acid biosynthesis. This reaction introduces a second double bond into the aromatic ring system. This chain is Chorismate synthase, found in Nostoc punctiforme (strain ATCC 29133 / PCC 73102).